Here is a 106-residue protein sequence, read N- to C-terminus: Movement protein TGB2 (106 aa).

The Cytoplasmic segment spans residues 1–8; sequence MPLTPPPD. A helical membrane pass occupies residues 9 to 29; the sequence is YTRVYTALAIGASIAFFTGLI. The Lumenal portion of the chain corresponds to 30–73; it reads TRNTLPSVGDLQHNLPHGGRYRDGTKSVEYCGPRKLNSVESGSR. Residues 74-94 form a helical membrane-spanning segment; it reads WTFQPWLLVIVLVALIIALGR. Residues 95-106 lie on the Cytoplasmic side of the membrane; it reads QGHNCRACGRSH.

It belongs to the Tymovirales TGBp2 protein family.

It is found in the host endoplasmic reticulum membrane. Plays a role in viral cell-to-cell propagation, by facilitating genome transport to neighboring plant cells through plasmosdesmata,. The protein is Movement protein TGB2 of Lilium (LSV).